A 116-amino-acid polypeptide reads, in one-letter code: uncharacterized protein (116 aa).

This is an uncharacterized protein from Saccharolobus islandicus (Sulfolobus islandicus).